Reading from the N-terminus, the 742-residue chain is Serine/threonine-protein kinase SKY1 (742 aa).

The disordered stretch occupies residues 13-146 (KSAHLADTST…KDYRPGGYHP (134 aa)). Residues 19 to 35 (DTSTDASISCEEATSSQ) are compositionally biased toward polar residues. The span at 56-73 (TKSKLSLALQTSKSSSSA) shows a compositional bias: low complexity. The segment covering 81-101 (TSSKTEDFSTKSIKKKPDSGV) has biased composition (basic and acidic residues). Residues 106 to 127 (SIQSDSGPQSDSDLDSDSSISS) show a composition bias toward low complexity. Over residues 128 to 140 (CDERNEESLKDYR) the composition is skewed to basic and acidic residues. Residues 158–706 (YILVRKLGWG…AGGLVNHPWL (549 aa)) form the Protein kinase domain. Residues 164–172 (LGWGHFSTV) and K187 each bind ATP. D294 (proton acceptor) is an active-site residue. Residues T383 and T386 each carry the phosphothreonine modification. 8 positions are modified to phosphoserine: S388, S393, S410, S427, S432, S445, S449, and S453. The segment at 459–491 (INEDSNDNNNNDNSKNKNNNNNNSNNNNNEDIM) is disordered. Positions 465–489 (DNNNNDNSKNKNNNNNNSNNNNNED) are enriched in low complexity.

This sequence belongs to the protein kinase superfamily. Ser/Thr protein kinase family.

It catalyses the reaction L-seryl-[protein] + ATP = O-phospho-L-seryl-[protein] + ADP + H(+). The catalysed reaction is L-threonyl-[protein] + ATP = O-phospho-L-threonyl-[protein] + ADP + H(+). Its function is as follows. Constitutively active kinase, specifically and sequentially phosphorylates serine/arginine (SR)-type shuttling mRNA binding proteins in their RS dipeptide repeats. The protein is Serine/threonine-protein kinase SKY1 (SKY1) of Saccharomyces cerevisiae (strain ATCC 204508 / S288c) (Baker's yeast).